The following is an 83-amino-acid chain: Small ribosomal subunit protein bS18 (83 aa).

The segment at 1–23 is disordered; the sequence is MKQRNNAKRVRLEQTRRPKKNPL.

The protein belongs to the bacterial ribosomal protein bS18 family. As to quaternary structure, part of the 30S ribosomal subunit. Forms a tight heterodimer with protein bS6.

Binds as a heterodimer with protein bS6 to the central domain of the 16S rRNA, where it helps stabilize the platform of the 30S subunit. In Corynebacterium efficiens (strain DSM 44549 / YS-314 / AJ 12310 / JCM 11189 / NBRC 100395), this protein is Small ribosomal subunit protein bS18.